A 440-amino-acid polypeptide reads, in one-letter code: Transposon Ty1-MR1 Gag polyprotein (440 aa).

Composition is skewed to polar residues over residues 1 to 31 (MESQ…TTQD), 46 to 60 (VSTQ…TPLS), and 137 to 168 (VGTH…TNQH). Disordered regions lie at residues 1 to 88 (MESQ…YPQQ), 137 to 174 (VGTH…PPPI), and 350 to 424 (QQES…TTEP). The segment at 299 to 401 (NNGIPINNKV…NSQSRTARAH (103 aa)) is RNA-binding. Positions 363 to 372 (SPSDEKKDSR) are enriched in basic and acidic residues. The segment covering 373–411 (TYTNTTKPKSITRNSQKPNNSQSRTARAHNVSTFNNSPG) has biased composition (polar residues).

In terms of assembly, homotrimer.

It is found in the cytoplasm. Functionally, capsid protein (CA) is the structural component of the virus-like particle (VLP), forming the shell that encapsulates the retrotransposons dimeric RNA genome. The particles are assembled from trimer-clustered units and there are holes in the capsid shells that allow for the diffusion of macromolecules. CA also has nucleocapsid-like chaperone activity, promoting primer tRNA(i)-Met annealing to the multipartite primer-binding site (PBS), dimerization of Ty1 RNA and initiation of reverse transcription. The chain is Transposon Ty1-MR1 Gag polyprotein (TY1A-MR1) from Saccharomyces cerevisiae (strain ATCC 204508 / S288c) (Baker's yeast).